Consider the following 346-residue polypeptide: Glycerol-1-phosphate dehydrogenase [NAD(P)+] (346 aa).

Residues 93–97 and 115–118 each bind NAD(+); these read GSIID and TTAS. D120 serves as a coordination point for substrate. S124 contacts NAD(+). D167 contacts substrate. 2 residues coordinate Zn(2+): D167 and H247. Residue H251 coordinates substrate. Position 263 (H263) interacts with Zn(2+).

This sequence belongs to the glycerol-1-phosphate dehydrogenase family. Zn(2+) is required as a cofactor.

Its subcellular location is the cytoplasm. The catalysed reaction is sn-glycerol 1-phosphate + NAD(+) = dihydroxyacetone phosphate + NADH + H(+). It catalyses the reaction sn-glycerol 1-phosphate + NADP(+) = dihydroxyacetone phosphate + NADPH + H(+). It functions in the pathway membrane lipid metabolism; glycerophospholipid metabolism. In terms of biological role, catalyzes the NAD(P)H-dependent reduction of dihydroxyacetonephosphate (DHAP or glycerone phosphate) to glycerol 1-phosphate (G1P). The G1P thus generated is used as the glycerophosphate backbone of phospholipids in the cellular membranes of Archaea. The protein is Glycerol-1-phosphate dehydrogenase [NAD(P)+] of Pyrococcus abyssi (strain GE5 / Orsay).